A 599-amino-acid chain; its full sequence is rRNA (cytosine-C(5))-methyltransferase NOP2C (599 aa).

The 108-residue stretch at 158–265 (PKEVLVSRKC…IAVDLNHRVF (108 aa)) folds into the PUA domain. S-adenosyl-L-methionine contacts are provided by residues 304–310 (CAAPGGK), Asp328, and Asp355. The disordered stretch occupies residues 372–454 (LINGDNSSSM…GGRAGKSQGF (83 aa)). Over residues 378–388 (SSSMTSHSELS) the composition is skewed to low complexity. Residues 399 to 412 (RRSEADKSCEKNDS) are compositionally biased toward basic and acidic residues. Residues 413–424 (TEQPNGGDNVSQ) show a composition bias toward polar residues. Basic residues predominate over residues 428–438 (RKNKGRLKNGR). Position 465 (Asp465) interacts with S-adenosyl-L-methionine. Catalysis depends on Cys516, which acts as the Nucleophile.

The protein belongs to the class I-like SAM-binding methyltransferase superfamily. RsmB/NOP family.

It is found in the nucleus. It localises to the nucleolus. It catalyses the reaction a cytidine in rRNA + S-adenosyl-L-methionine = a 5-methylcytidine in rRNA + S-adenosyl-L-homocysteine + H(+). Involved in ribosomal large subunit assembly. S-adenosyl-L-methionine-dependent methyltransferase that may methylates the C(5) position of cytosine in rRNA. May play a role in the regulation of the cell cycle and the increased nucleolar activity that is associated with the cell proliferation. Seems involved in the regulation of cell proliferation. The sequence is that of rRNA (cytosine-C(5))-methyltransferase NOP2C from Arabidopsis thaliana (Mouse-ear cress).